Reading from the N-terminus, the 412-residue chain is D-nopaline dehydrogenase (412 aa).

The protein belongs to the lysopine/nopaline/octopine/opine/vitopine dehydrogenases family. Homotetramer.

It carries out the reaction D-nopaline + NADP(+) + H2O = L-arginine + 2-oxoglutarate + NADPH + H(+). The sequence is that of D-nopaline dehydrogenase (nos) from Agrobacterium vitis (Rhizobium vitis).